A 305-amino-acid chain; its full sequence is UPF0282 protein Pisl_0021 (305 aa).

It belongs to the UPF0282 family.

The sequence is that of UPF0282 protein Pisl_0021 from Pyrobaculum islandicum (strain DSM 4184 / JCM 9189 / GEO3).